A 103-amino-acid polypeptide reads, in one-letter code: 6-pyruvoyl tetrahydrobiopterin synthase (103 aa).

Ala-1 carries the post-translational modification N-acetylalanine. His-27 is a Zn(2+) binding site. Residues His-53 and Glu-92 each act as charge relay system in the active site.

The protein belongs to the PTPS family. Homohexamer formed of two homotrimers in a head to head fashion. It depends on Zn(2+) as a cofactor.

The enzyme catalyses 7,8-dihydroneopterin 3'-triphosphate = 6-pyruvoyl-5,6,7,8-tetrahydropterin + triphosphate + H(+). The protein operates within cofactor biosynthesis; tetrahydrobiopterin biosynthesis; tetrahydrobiopterin from 7,8-dihydroneopterin triphosphate: step 1/3. Functionally, involved in the biosynthesis of tetrahydrobiopterin, an essential cofactor of aromatic amino acid hydroxylases. Catalyzes the transformation of 7,8-dihydroneopterin triphosphate into 6-pyruvoyl tetrahydropterin. This chain is 6-pyruvoyl tetrahydrobiopterin synthase (pts), found in Salmo salar (Atlantic salmon).